Consider the following 427-residue polypeptide: Transcobalamin-2 (427 aa).

Residues 1–18 form the signal peptide; sequence MRHLGAFLFLLGVLGALT. 4 disulfide bridges follow: cysteine 21-cysteine 267, cysteine 83-cysteine 96, cysteine 116-cysteine 309, and cysteine 165-cysteine 205. Cob(II)alamin-binding positions include glutamine 104, 152 to 156, histidine 190, 190 to 194, asparagine 242, serine 245, glutamine 291, and 395 to 397; these read TSYYQ, HHSVD, and WQL.

This sequence belongs to the eukaryotic cobalamin transport proteins family. In terms of assembly, interacts with CD320 (via LDL-receptor class A domains).

The protein localises to the secreted. In terms of biological role, primary vitamin B12-binding and transport protein. Delivers cobalamin to cells. The chain is Transcobalamin-2 (TCN2) from Homo sapiens (Human).